The following is a 329-amino-acid chain: UPF0158 protein CT_429 (329 aa).

A disordered region spans residues 292–329 (GYDSDGETGDFFDEEYDDEEEEIKPKKTTKRGRKKSRS). Residues 295-313 (SDGETGDFFDEEYDDEEEE) show a composition bias toward acidic residues. The segment covering 317 to 329 (KKTTKRGRKKSRS) has biased composition (basic residues).

Belongs to the UPF0158 family.

In Chlamydia trachomatis serovar D (strain ATCC VR-885 / DSM 19411 / UW-3/Cx), this protein is UPF0158 protein CT_429.